The sequence spans 511 residues: 2-isopropylmalate synthase (511 aa).

The 263-residue stretch at 5-267 (LFIFDTTLRD…DTRIDATQIV (263 aa)) folds into the Pyruvate carboxyltransferase domain. 4 residues coordinate Mn(2+): aspartate 14, histidine 202, histidine 204, and asparagine 238. Residues 393–511 (KLLSMKVCSE…SKRERAHPQV (119 aa)) are regulatory domain.

The protein belongs to the alpha-IPM synthase/homocitrate synthase family. LeuA type 1 subfamily. In terms of assembly, homodimer. It depends on Mn(2+) as a cofactor.

It is found in the cytoplasm. The catalysed reaction is 3-methyl-2-oxobutanoate + acetyl-CoA + H2O = (2S)-2-isopropylmalate + CoA + H(+). Its pathway is amino-acid biosynthesis; L-leucine biosynthesis; L-leucine from 3-methyl-2-oxobutanoate: step 1/4. Its function is as follows. Catalyzes the condensation of the acetyl group of acetyl-CoA with 3-methyl-2-oxobutanoate (2-ketoisovalerate) to form 3-carboxy-3-hydroxy-4-methylpentanoate (2-isopropylmalate). The chain is 2-isopropylmalate synthase from Thiobacillus denitrificans (strain ATCC 25259 / T1).